Reading from the N-terminus, the 82-residue chain is M-zodatoxin-Lt3b (82 aa).

Residues 1 to 22 (MKTYAVLLALVVAFVCIAESTG) form the signal peptide. The propeptide occupies 23-61 (YPVEDLEDDELTELEAEALLEDLLEDLELEDLDYNEEAR). A Processing quadruplet motif motif is present at residues 58–61 (EEAR). Ala-81 is subject to Alanine amide.

Cleavage of the propeptide depends on the processing quadruplet motif (XXXR, with at least one of X being E). As to expression, expressed by the venom gland.

It is found in the secreted. Functionally, it has antimicrobial activity against Gram-positive bacteria (A.globiformis VKM Ac-1112 (MIC=0.7 uM), and B.subtilis VKM B-501 (MIC=2.9 uM)), Gram-negative bacteria (E.coli DH5-alpha (MIC=23 uM), E.coli MH1 (MIC=28 uM), and P.aeruginosa PAO1 (MIC&gt;45 uM)), and yeasts (P.pastoris GS115 (MIC=23 uM), and S.cerevisiae Y190 (MIC=23 uM)). Does not have hemolytic against rabbit erythrocytes. Causes paralysis, but is not lethal when injected into insect (M.domestica) larvae. The polypeptide is M-zodatoxin-Lt3b (Lachesana tarabaevi (Spider)).